The following is an 896-amino-acid chain: MLSTLIKKMFGSRNERTLRRMEKSVMAINAFEPKMQALSNEELAGKTQEFKERFNNGESLDELLAEAFATVREVSLRTLGLRHFDVQLIGGMVLHEGNIAEMRTGEGKTLVATLPAYLNAISGRGVHIVTVNDYLAKRDSQWMKPIYEFLGLTVGVIYPDMSHKEKQEAYKADIVYGTNNEYGFDYLRDNMAFSLTDKVQRELNFAIVDEVDSILIDEARTPLIISGAAEDSSELYIKINSLIPQLKKQEEEGDEGDYTIDEKQKQAHLTDAGHLHIEELLTKAKLLDPGESLYHASNIMLMHHVNAALKAHAMFHRDIDYIVKDNQVVIVDEHTGRTMPGRRWSEGLHQAVEAKEGVSIQNENQTLASITFQNFFRMYNKLSGMTGTADTEAYEFQQIYNLEVVVIPTNRSMIRKDEADLVYLTQADKFQAIIEDVRECGVRRQPVLVGTVSIEASEFLSQLLKKENIKHQVLNAKFHEKEAQIIAEAGRPGAVTIATNMAGRGTDIVLGGSLAADLANLPADASEQEKEVVKKEWQKRHDEVIAAGGLRIIGSERHESRRIDNQLRGRAGRQGDPGSSRFYLSLEDNLMRIFASERVGSMMRRLGMQPGEPIEHSLVTRAIENAQRKLEGHHFDVRKQLLDYDNVANDQRQVIYTQRSSIMAMTDTQEVVEMMREEVMDSLVDTYIPPQSLEDQWDPQALSDVLSDEFKIKAPVPDWIDKDHSIQPEQIKEKILALAIEHYDEKVRKVGRPVISQFEKSIILQTLDNHWREHLAAMDQLRQGIHLRGYAQKDPKQEYKKEAFSLFTMMLDNLKYEVIRILSSVEIQTEEDAHVVEEQRRAEQIKKMNLMHENLSENDEASETQTFRRQEKKIGRNDPCPCGSGKKYKACHGSLV.

Residues glutamine 87, 105–109 (GEGKT), and aspartate 507 contribute to the ATP site. Positions 855–879 (LSENDEASETQTFRRQEKKIGRNDP) are disordered. Positions 866–876 (TFRRQEKKIGR) are enriched in basic and acidic residues. Zn(2+) is bound by residues cysteine 880, cysteine 882, cysteine 891, and histidine 892.

It belongs to the SecA family. Monomer and homodimer. Part of the essential Sec protein translocation apparatus which comprises SecA, SecYEG and auxiliary proteins SecDF-YajC and YidC. It depends on Zn(2+) as a cofactor.

The protein localises to the cell inner membrane. It is found in the cytoplasm. It catalyses the reaction ATP + H2O + cellular proteinSide 1 = ADP + phosphate + cellular proteinSide 2.. In terms of biological role, part of the Sec protein translocase complex. Interacts with the SecYEG preprotein conducting channel. Has a central role in coupling the hydrolysis of ATP to the transfer of proteins into and across the cell membrane, serving both as a receptor for the preprotein-SecB complex and as an ATP-driven molecular motor driving the stepwise translocation of polypeptide chains across the membrane. The polypeptide is Protein translocase subunit SecA (Legionella pneumophila (strain Lens)).